Here is a 3907-residue protein sequence, read N- to C-terminus: Cyclo-acetoacetyl-L-tryptophan synthase (3907 aa).

The region spanning 2-436 (KTPIAVVGTA…GTNAHAIIES (435 aa)) is the Ketosynthase family 3 (KS3) domain. Active-site for beta-ketoacyl synthase activity residues include Cys-176, His-313, and His-356. Positions 555–870 (IFTGQGAQWA…SLLRRGQNDL (316 aa)) are malonyl-CoA:ACP transacylase (MAT) domain. The N-terminal hotdog fold stretch occupies residues 937–1074 (HPLLGRRSAD…ARLTLHLGDA (138 aa)). The segment at 937–1236 (HPLLGRRSAD…GLVMKSVPQP (300 aa)) is dehydratase (DH) domain. In terms of domain architecture, PKS/mFAS DH spans 937-1239 (HPLLGRRSAD…MKSVPQPDTS (303 aa)). The tract at residues 1092–1239 (LAPVDVADLY…MKSVPQPDTS (148 aa)) is C-terminal hotdog fold. The tract at residues 1386–1573 (AAMFSQLSKD…FSGIDHIFHD (188 aa)) is methyltransferase (MT) domain. A ketoreductase (KR)domain region spans residues 2064 to 2238 (GTYFMIDMAT…VGSVMALGMV (175 aa)). A disordered region spans residues 2324–2352 (TKEGQYAEQEDSPSLLVPDEQLQESGPGR). In terms of domain architecture, Carrier 1 spans 2356 to 2430 (DDLLARLSGK…LCEKAVPKPN (75 aa)). Ser-2390 is subject to O-(pantetheine 4'-phosphoryl)serine. The tract at residues 2504–2926 (MSPHQSQIWF…SSNPLISVQS (423 aa)) is condensation. The interval 2959 to 3359 (FQDMVDQYGD…GSLILLGRMD (401 aa)) is adenylation. One can recognise a Carrier 2 domain in the interval 3474 to 3549 (KRLTLGEGEL…QMALKVDARK (76 aa)). An O-(pantetheine 4'-phosphoryl)serine modification is found at Ser-3509. The reductase (RED) domain stretch occupies residues 3594-3813 (LTGSTSFLGR…DFQKVEIIAE (220 aa)).

In the C-terminal section; belongs to the NRP synthetase family.

The catalysed reaction is L-tryptophan + malonyl-CoA + acetyl-CoA = cyclo-acetoacetyl-L-tryptophan + CO2 + 2 CoA + H2O. It functions in the pathway secondary metabolite biosynthesis. In terms of biological role, hybrid PKS-NRPS synthetase; part of the gene cluster that mediates the biosynthesis of the fungal neurotoxin cyclopiazonic acid (CPA), a nanomolar inhibitor of Ca(2+)-ATPase with a unique pentacyclic indole tetramic acid scaffold. The hybrid two module polyketide synthase-nonribosomal peptide synthetase (PKS-NRPS) cpaS incorporates acetyl-CoA, malonyl-CoA, and tryptophan (Trp) and utilizes a C-terminal redox-incompetent reductase domain to make and release the tryptophan tetramic acid, cyclo-acetoacetyl-L-tryptophan (c-AATrp), as the first intermediate in the pathway. CpaS catalyzes a Dieckmann-type cyclization on the N-acetoacetyl-Trp intermediate bound in thioester linkage to the phosphopantetheinyl arm of the T domain to form and release c-AATrp. CpaD then regiospecifically dimethylallylates c-AATrp to form beta-cyclopiazonic acid. CpaD discriminates against free Trp but accepts tryptophan-containing thiohydantoins, diketopiperazines, and linear peptides as substrates for C4-prenylation and also acts as regiospecific O-dimethylallyltransferase (DMAT) on a tyrosine-derived tetramic acid. The beta-cyclopiazonate dehydrogenase cpaO then carries out the dehydrogenation of beta-CPA to yield an unstable enimine product, which is captured by intramolecular cyclization to create the pentacyclic fused scaffold of alpha-cyclopiazonate. Finally, the cytochrome P450 monooxygenase cpaH mediates the conversion of CPA into the less toxic 2-oxocyclopiazonic acid, the end product of the CPA pathway in A.oryza. This Aspergillus oryzae (Yellow koji mold) protein is Cyclo-acetoacetyl-L-tryptophan synthase.